Consider the following 143-residue polypeptide: Large ribosomal subunit protein uL13 (143 aa).

The protein belongs to the universal ribosomal protein uL13 family. As to quaternary structure, part of the 50S ribosomal subunit.

In terms of biological role, this protein is one of the early assembly proteins of the 50S ribosomal subunit, although it is not seen to bind rRNA by itself. It is important during the early stages of 50S assembly. The chain is Large ribosomal subunit protein uL13 from Dehalococcoides mccartyi (strain ATCC BAA-2100 / JCM 16839 / KCTC 5957 / BAV1).